Here is a 1498-residue protein sequence, read N- to C-terminus: DNA-directed RNA polymerase subunit beta' (1498 aa).

The Zn(2+) site is built by cysteine 67, cysteine 69, cysteine 82, and cysteine 85. Mg(2+) contacts are provided by aspartate 499, aspartate 501, and aspartate 503. Positions 867, 943, 950, and 953 each coordinate Zn(2+).

This sequence belongs to the RNA polymerase beta' chain family. As to quaternary structure, the RNAP catalytic core consists of 2 alpha, 1 beta, 1 beta' and 1 omega subunit. When a sigma factor is associated with the core the holoenzyme is formed, which can initiate transcription. It depends on Mg(2+) as a cofactor. Zn(2+) serves as cofactor.

The catalysed reaction is RNA(n) + a ribonucleoside 5'-triphosphate = RNA(n+1) + diphosphate. DNA-dependent RNA polymerase catalyzes the transcription of DNA into RNA using the four ribonucleoside triphosphates as substrates. In Chlorobium phaeobacteroides (strain BS1), this protein is DNA-directed RNA polymerase subunit beta'.